Reading from the N-terminus, the 394-residue chain is Protein TsgA homolog (394 aa).

Transmembrane regions (helical) follow at residues 11–31, 51–71, 78–98, 101–121, 134–154, 162–182, 206–226, 250–270, 273–293, 297–317, 332–352, and 361–381; these read WISFFSYALTGALVIVTGMVM, FLNAGILISIFLNAWLMEIVP, FGFVLMVAAVAGLMVSHSIAL, VSMFVLGLVSGITMSIGTFLI, LLFTDSFFSMAGMIFPMVAAV, WYWVYACIGLVYVAIFVLTFG, IGVLFLSVAALCYILGQLGFI, FWMSYMFGMWAFSFILRFFDL, ILTVLAGLATVLMYLFINGAP, AWFILTLGFFSSAIYTSIITL, FVLTCGTIGTMLTFVVTGPIV, and LQTANGLYAVVFVMCLILGFV.

It belongs to the major facilitator superfamily. TsgA family.

The protein localises to the cell inner membrane. This is Protein TsgA homolog from Enterobacter sp. (strain 638).